A 71-amino-acid chain; its full sequence is Plasticin-C1 (71 aa).

A signal peptide spans 1–22; that stretch reads MAFLKKSLLLVLFLGLVSLSIC. The propeptide occupies 23–45; the sequence is EEEKRENEDEEKQEDDDQSENKR. The disordered stretch occupies residues 25-46; it reads EKRENEDEEKQEDDDQSENKRG. Residues 30 to 40 are compositionally biased toward acidic residues; it reads EDEEKQEDDDQ. N68 carries the post-translational modification Asparagine amide. Residues 70–71 constitute a propeptide that is removed on maturation; sequence ES.

The protein belongs to the frog skin active peptide (FSAP) family. Plasticin subfamily. Expressed by the skin glands.

It localises to the secreted. The protein resides in the target cell membrane. In terms of biological role, neutral peptide with no antimicrobial activity. May act in synergy with cationic peptides by enhancing their activity. Has a moderate hemolytic activity. The chain is Plasticin-C1 from Agalychnis callidryas (Red-eyed tree frog).